A 233-amino-acid polypeptide reads, in one-letter code: ATP-dependent dethiobiotin synthetase BioD (233 aa).

12–17 (EVGKTY) serves as a coordination point for ATP. Position 16 (threonine 16) interacts with Mg(2+). Residue lysine 37 is part of the active site. ATP is bound by residues aspartate 54, 120 to 123 (EGAG), and 186 to 187 (ND). Mg(2+) contacts are provided by aspartate 54 and glutamate 120.

The protein belongs to the dethiobiotin synthetase family. In terms of assembly, homodimer. Mg(2+) is required as a cofactor.

It is found in the cytoplasm. It carries out the reaction (7R,8S)-7,8-diammoniononanoate + CO2 + ATP = (4R,5S)-dethiobiotin + ADP + phosphate + 3 H(+). Its pathway is cofactor biosynthesis; biotin biosynthesis; biotin from 7,8-diaminononanoate: step 1/2. In terms of biological role, catalyzes a mechanistically unusual reaction, the ATP-dependent insertion of CO2 between the N7 and N8 nitrogen atoms of 7,8-diaminopelargonic acid (DAPA, also called 7,8-diammoniononanoate) to form a ureido ring. This Alteromonas mediterranea (strain DSM 17117 / CIP 110805 / LMG 28347 / Deep ecotype) protein is ATP-dependent dethiobiotin synthetase BioD.